Consider the following 117-residue polypeptide: Ribosome-binding factor A (117 aa).

It belongs to the RbfA family. In terms of assembly, monomer. Binds 30S ribosomal subunits, but not 50S ribosomal subunits or 70S ribosomes.

The protein resides in the cytoplasm. Its function is as follows. One of several proteins that assist in the late maturation steps of the functional core of the 30S ribosomal subunit. Associates with free 30S ribosomal subunits (but not with 30S subunits that are part of 70S ribosomes or polysomes). Required for efficient processing of 16S rRNA. May interact with the 5'-terminal helix region of 16S rRNA. This Streptococcus thermophilus (strain CNRZ 1066) protein is Ribosome-binding factor A.